Consider the following 503-residue polypeptide: ATP synthase subunit beta (503 aa).

Glycine 157–threonine 164 is a binding site for ATP.

Belongs to the ATPase alpha/beta chains family. F-type ATPases have 2 components, CF(1) - the catalytic core - and CF(0) - the membrane proton channel. CF(1) has five subunits: alpha(3), beta(3), gamma(1), delta(1), epsilon(1). CF(0) has three main subunits: a(1), b(2) and c(9-12). The alpha and beta chains form an alternating ring which encloses part of the gamma chain. CF(1) is attached to CF(0) by a central stalk formed by the gamma and epsilon chains, while a peripheral stalk is formed by the delta and b chains.

It is found in the cell inner membrane. It carries out the reaction ATP + H2O + 4 H(+)(in) = ADP + phosphate + 5 H(+)(out). Functionally, produces ATP from ADP in the presence of a proton gradient across the membrane. The catalytic sites are hosted primarily by the beta subunits. This Flavobacterium johnsoniae (strain ATCC 17061 / DSM 2064 / JCM 8514 / BCRC 14874 / CCUG 350202 / NBRC 14942 / NCIMB 11054 / UW101) (Cytophaga johnsonae) protein is ATP synthase subunit beta.